The primary structure comprises 696 residues: MMTTATVLVELLTEELPPKALPRLGETFAAKVFEGLKARDLVAEDRGFRCFAAPRRLAVTVPTVRAAAPSREVTEKIMPVQVALDAEGRPTPALLKKLQAKGIAPEAVASFERRVDGKAEALFYTHLEPGAALDDVLAAIVQEAVKALPIPKLMRWGAGDAQFVRPVHKLAMLHGARVVPGRVLDLDAGRVTMGHRFMSRGEIELATAEAYEPTLLAEGKVIPDFAERRSNIERQLVATAQEQGASLGEYADLLDEVAALVEHPTVYVGEFELEFLAVPQECLILTMRANQKYFPLFDAAGKLLNRFLIVSNMRLADPSNIVAGNQRVVRPRLSDARFFFEQDRKHTLDSRLPRLAPVVYHNKLGSQLERVERLERLAGRIADRLHGDVAAASRAARLAKADLVTDMVGEFPELQGIMGRYYALNDGEGEVVADAVQSHYQPRFAGDTLPAGNTACAVALADKLDTLVGFFGIGQLPTGDKDPFGLRRAALGVLRILIETPLPLDLAALVGDAAEGFAPGLLTAADFESQLLDFMFERLRNLLREAGHAVDVVDAVLALHPTRIDLVPAKLDAVRVFRGLPEAEALAAANKRIVNILKKAEDELPEPDVALLQEQAEKALFHAVVEVAPLVHSHVANEDYTDALCALAGLRAAVDTFFDDVMVMVEEPLTRRNRLALLRQLAGLMNQVADLSRLSA.

Belongs to the class-II aminoacyl-tRNA synthetase family. Tetramer of two alpha and two beta subunits.

The protein resides in the cytoplasm. It catalyses the reaction tRNA(Gly) + glycine + ATP = glycyl-tRNA(Gly) + AMP + diphosphate. This chain is Glycine--tRNA ligase beta subunit, found in Aromatoleum aromaticum (strain DSM 19018 / LMG 30748 / EbN1) (Azoarcus sp. (strain EbN1)).